The chain runs to 386 residues: TRIBOA-glucoside O-methyltransferase BX7 (386 aa).

S-adenosyl-L-methionine-binding residues include Gly224, Asp248, Met270, and Lys283. His287 functions as the Proton acceptor in the catalytic mechanism.

The protein belongs to the class I-like SAM-binding methyltransferase superfamily. Cation-independent O-methyltransferase family. COMT subfamily. In terms of tissue distribution, expressed in seedlings and newly formed crown roots. Highest expression in the scutellar node. Low to non detectable levels in cob, tassel and mature organs like husk or leaves.

The catalysed reaction is TRIBOA beta-D-glucoside + S-adenosyl-L-methionine = DIMBOA beta-D-glucoside + S-adenosyl-L-homocysteine + H(+). Its function is as follows. O-methyltransferase involved in the benzoxazinoid glucoside biosynthesis. Can use 2,4,7-trihydroxy-2H-1,4-benzoxazin-3(4H)-one 2-D-glucoside (TRIBOA-glucoside) as substrate, but not aglucone TRIBOA, caffeic acid, ferulic acid, apigenin or quercetin. The sequence is that of TRIBOA-glucoside O-methyltransferase BX7 (BX7) from Zea mays (Maize).